A 1048-amino-acid chain; its full sequence is Bifunctional heparan sulfate N-deacetylase/N-sulfotransferase (1048 aa).

The Cytoplasmic segment spans residues 1–172 (MTISGGNQHN…RRCFGINVRR (172 aa)). A helical; Signal-anchor for type II membrane protein membrane pass occupies residues 173 to 192 (CVLALLAITMVSIFYYTHYV). The heparan sulfate N-deacetylase stretch occupies residues 192 to 752 (VDTGVFNGLI…VRHKKIWSKT (561 aa)). Residues 193 to 1048 (DTGVFNGLIQ…WLKDDLSTGT (856 aa)) lie on the Lumenal side of the membrane. Residues Asn388 and Asn555 are each glycosylated (N-linked (GlcNAc...) asparagine). A heparan sulfate N-sulfotransferase region spans residues 753–1048 (KNCDSLPKFL…WLKDDLSTGT (296 aa)). Residue Lys768 is the For sulfotransferase activity of the active site. 768 to 772 (KTGTT) lines the 3'-phosphoadenylyl sulfate pocket. A glycan (N-linked (GlcNAc...) asparagine) is linked at Asn823. Ser877 contacts 3'-phosphoadenylyl sulfate. An N-linked (GlcNAc...) asparagine glycan is attached at Asn892. A disulfide bridge connects residues Cys983 and Cys993. A 3'-phosphoadenylyl sulfate-binding site is contributed by 998 to 1002 (KGRQY).

Belongs to the sulfotransferase 1 family. NDST subfamily. As to quaternary structure, monomer.

The protein localises to the golgi apparatus membrane. The catalysed reaction is alpha-D-glucosaminyl-[heparan sulfate](n) + 3'-phosphoadenylyl sulfate = N-sulfo-alpha-D-glucosaminyl-[heparan sulfate](n) + adenosine 3',5'-bisphosphate + 2 H(+). It functions in the pathway glycan metabolism; heparan sulfate biosynthesis. It participates in glycan metabolism; heparin biosynthesis. Its function is as follows. Essential bifunctional enzyme that catalyzes both the N-deacetylation and the N-sulfation of glucosamine (GlcNAc) of the glycosaminoglycan in heparan sulfate. Modifies the GlcNAc-GlcA disaccharide repeating sugar backbone to make N-sulfated heparosan, a prerequisite substrate for later modifications in heparin biosynthesis. Plays a role in diffusion of morphogen wingless (wg) via its role in heparan sulfate proteoglycans (HSPGs) biosynthesis, HSPGs being required for movement of wg morphogens. Required for wg signaling during both embryonic and imaginal disk development. Also required for FGF receptor signaling. This Drosophila melanogaster (Fruit fly) protein is Bifunctional heparan sulfate N-deacetylase/N-sulfotransferase (sfl).